Here is a 105-residue protein sequence, read N- to C-terminus: Heat shock protein HspQ (105 aa).

This sequence belongs to the HspQ family.

It localises to the cytoplasm. Involved in the degradation of certain denaturated proteins, including DnaA, during heat shock stress. The polypeptide is Heat shock protein HspQ (Baumannia cicadellinicola subsp. Homalodisca coagulata).